A 954-amino-acid chain; its full sequence is Glycine dehydrogenase (decarboxylating) (954 aa).

The residue at position 704 (Lys-704) is an N6-(pyridoxal phosphate)lysine.

The protein belongs to the GcvP family. In terms of assembly, the glycine cleavage system is composed of four proteins: P, T, L and H. It depends on pyridoxal 5'-phosphate as a cofactor.

The enzyme catalyses N(6)-[(R)-lipoyl]-L-lysyl-[glycine-cleavage complex H protein] + glycine + H(+) = N(6)-[(R)-S(8)-aminomethyldihydrolipoyl]-L-lysyl-[glycine-cleavage complex H protein] + CO2. The glycine cleavage system catalyzes the degradation of glycine. The P protein binds the alpha-amino group of glycine through its pyridoxal phosphate cofactor; CO(2) is released and the remaining methylamine moiety is then transferred to the lipoamide cofactor of the H protein. The protein is Glycine dehydrogenase (decarboxylating) of Rhizobium etli (strain CIAT 652).